The chain runs to 73 residues: Potassium channel toxin alpha-KTx 27.4 (73 aa).

Residues 1–26 (MKFLFLTLVLLYFTAILVFIVFPSYA) form the signal peptide.

This sequence belongs to the short scorpion toxin superfamily. Potassium channel inhibitor family. Alpha-KTx 27 subfamily. Post-translationally, contains 4 disulfide bonds. Expressed by the venom gland.

The protein localises to the secreted. The polypeptide is Potassium channel toxin alpha-KTx 27.4 (Mesobuthus gibbosus (Mediterranean checkered scorpion)).